The primary structure comprises 210 residues: Small ribosomal subunit protein uS7 (210 aa).

Acidic residues predominate over residues 1 to 22 (MSDEQPAEDETEEAAAESEDTQ). The segment at 1-23 (MSDEQPAEDETEEAAAESEDTQE) is disordered.

This sequence belongs to the universal ribosomal protein uS7 family. In terms of assembly, part of the 30S ribosomal subunit. Contacts proteins S9 and S11.

Functionally, one of the primary rRNA binding proteins, it binds directly to 16S rRNA where it nucleates assembly of the head domain of the 30S subunit. Is located at the subunit interface close to the decoding center. This is Small ribosomal subunit protein uS7 from Halobacterium salinarum (strain ATCC 29341 / DSM 671 / R1).